A 118-amino-acid chain; its full sequence is Thioredoxin H5 (118 aa).

Alanine 2 carries the post-translational modification N-acetylalanine. Residues 2-113 (AGEGEVIACH…INEKLMKHGG (112 aa)) enclose the Thioredoxin domain. Active-site nucleophile residues include cysteine 39 and cysteine 42. An intrachain disulfide couples cysteine 39 to cysteine 42.

Belongs to the thioredoxin family. Plant H-type subfamily. As to quaternary structure, interacts with MDH1.

It is found in the cytoplasm. In terms of biological role, thiol-disulfide oxidoreductase involved in response to pathogens and oxidative stresses. Required for the response to victorin, a phytotoxin which induces programmed cell death in sensitive plants. Possesses insulin disulfide bonds reducing activity. The chain is Thioredoxin H5 (TRX5) from Arabidopsis thaliana (Mouse-ear cress).